The primary structure comprises 160 residues: MFGMGFFEILVVLVVAIIFLGPEKFPQAVVDVVKFFRAVKKTLNDAKDTLDKEINIEEIKKETLEYQKLFENKVESLKGVKIEELEDAKVTAENEIKSIQDLMQDYQKSLETNTIPNHLNEEVSNEEALNKEVSSDESPKEVQLATDNNTKEHDKEKENV.

A helical membrane pass occupies residues 1–21 (MFGMGFFEILVVLVVAIIFLG). Residues 118-160 (HLNEEVSNEEALNKEVSSDESPKEVQLATDNNTKEHDKEKENV) are disordered. 2 stretches are compositionally biased toward basic and acidic residues: residues 128–140 (ALNK…ESPK) and 149–160 (NTKEHDKEKENV).

Belongs to the TatB family. In terms of assembly, the Tat system comprises two distinct complexes: a TatABC complex, containing multiple copies of TatA, TatB and TatC subunits, and a separate TatA complex, containing only TatA subunits. Substrates initially bind to the TatABC complex, which probably triggers association of the separate TatA complex to form the active translocon.

The protein resides in the cell inner membrane. In terms of biological role, part of the twin-arginine translocation (Tat) system that transports large folded proteins containing a characteristic twin-arginine motif in their signal peptide across membranes. Together with TatC, TatB is part of a receptor directly interacting with Tat signal peptides. TatB may form an oligomeric binding site that transiently accommodates folded Tat precursor proteins before their translocation. The protein is Sec-independent protein translocase protein TatB of Helicobacter pylori (strain ATCC 700392 / 26695) (Campylobacter pylori).